Consider the following 151-residue polypeptide: MFQDPRERPRTIHELCEALNTPLQSLQVQCVYCKKTLEWADVYNFAICDLRIVYRNDSAYGACKKCIIFYSKIIEYRRYTSSVYGATLEARPKRSLCNLLIRCHRCQIPLGPEEKQRIVDEKRRFHEIAGYWKGLCTNCWRPRREATETQV.

2 zinc fingers span residues 30–66 (CVYCKKTLEWADVYNFAICDLRIVYRNDSAYGACKKC) and 103–139 (CHRCQIPLGPEEKQRIVDEKRRFHEIAGYWKGLCTNC). Residues 149–151 (TQV) carry the PDZ-binding domain motif.

It belongs to the papillomaviridae E6 protein family. In terms of assembly, forms homodimers. Interacts with ubiquitin-protein ligase UBE3A/E6-AP and thus forms a complex with human TP53. Interacts with human NFX1 and MAGI3. Interacts with human IRF3; this interaction inhibits the establishment of antiviral state. Interacts with human TYK2; this interaction inhibits JAK-STAT activation by interferon alpha. Interacts with host DLG1; this interaction leads to the proteasomal degradation of DLG1.

The protein localises to the host cytoplasm. It is found in the host nucleus. In terms of biological role, plays a major role in the induction and maintenance of cellular transformation. Acts mainly as an oncoprotein by stimulating the destruction of many host cell key regulatory proteins. E6 associates with host UBE3A/E6-AP ubiquitin-protein ligase, and inactivates tumor suppressors TP53 and TP73 by targeting them to the 26S proteasome for degradation. In turn, DNA damage and chromosomal instabilities increase and lead to cell proliferation and cancer development. The complex E6/E6AP targets several other substrates to degradation via the proteasome including host DLG1 or NFX1, a repressor of human telomerase reverse transcriptase (hTERT). The resulting increased expression of hTERT prevents the shortening of telomere length leading to cell immortalization. Other cellular targets including BAK1, Fas-associated death domain-containing protein (FADD) and procaspase 8, are degraded by E6/E6AP causing inhibition of apoptosis. E6 also inhibits immune response by interacting with host IRF3 and TYK2. These interactions prevent IRF3 transcriptional activities and inhibit TYK2-mediated JAK-STAT activation by interferon alpha resulting in inhibition of the interferon signaling pathway. This is Protein E6 from Homo sapiens (Human).